A 267-amino-acid chain; its full sequence is Ribosomal RNA small subunit methyltransferase A (267 aa).

6 residues coordinate S-adenosyl-L-methionine: Asn16, Leu18, Gly43, Glu64, Asp88, and Asn109.

This sequence belongs to the class I-like SAM-binding methyltransferase superfamily. rRNA adenine N(6)-methyltransferase family. RsmA subfamily.

The protein localises to the cytoplasm. It carries out the reaction adenosine(1518)/adenosine(1519) in 16S rRNA + 4 S-adenosyl-L-methionine = N(6)-dimethyladenosine(1518)/N(6)-dimethyladenosine(1519) in 16S rRNA + 4 S-adenosyl-L-homocysteine + 4 H(+). Specifically dimethylates two adjacent adenosines (A1518 and A1519) in the loop of a conserved hairpin near the 3'-end of 16S rRNA in the 30S particle. May play a critical role in biogenesis of 30S subunits. This chain is Ribosomal RNA small subunit methyltransferase A, found in Acidithiobacillus ferrooxidans (strain ATCC 23270 / DSM 14882 / CIP 104768 / NCIMB 8455) (Ferrobacillus ferrooxidans (strain ATCC 23270)).